The primary structure comprises 427 residues: MATVIHNPLKALGDQFYKEAIEHCRSYNSRLCAERSVRLPFLDSQTGVAQNNCYIWMEKRHRGPGLAPGQLYTYPARCWRKKRRLHPPEDSRLKLLEIKPETSHLPGKTELITETEFITKMSVDLRRFLSCKLYTSEVDLPLKKDGFTSESTTLEALLRGEGIEKKMDTKEEDPIQEIQRVLENDENADEVNEEEDLEEDIPKRKNRPRGRPKTPTWKKIFQKNARGSGGGRRRNDAASQDDHDKPYVCDICGKRYKNRPGLSYHYAHTHLASEEGDEAREQETRSSPVHRNENHKPQKGPDGVIIPNNYCDFCLGGSNMNKKSGRPEELVSCSDCGRSGHPTCLQFTTNMTEAVKTYQWQCIECKSCSLCGTSENDDQLLFCDDCDRGYHMYCLNPPVFEPPEGSWSCHLCRELLRERASAFGFQA.

A disordered region spans residues 182–244 (LENDENADEV…NDAASQDDHD (63 aa)). Over residues 184–199 (NDENADEVNEEEDLEE) the composition is skewed to acidic residues. Residues 233–244 (RRNDAASQDDHD) show a composition bias toward basic and acidic residues. The C2H2-type zinc finger occupies 247–270 (YVCDICGKRYKNRPGLSYHYAHTH). The segment at 272 to 301 (ASEEGDEAREQETRSSPVHRNENHKPQKGP) is disordered. Basic and acidic residues predominate over residues 279-296 (AREQETRSSPVHRNENHK). 2 consecutive PHD-type zinc fingers follow at residues 308-368 (NNYC…CKSC) and 365-415 (CKSC…CREL).

The protein belongs to the requiem/DPF family. As to quaternary structure, component of the BAF complex. Interacts with acetylated histones H3 and H4. Component of neuron-specific chromatin remodeling complex (nBAF complex), a subfamily of ATP-dependent SWI/SNF chromatin remodeling complexes. As to expression, expressed in the heart and somites.

Its subcellular location is the nucleus. Its function is as follows. Muscle-specific component of the BAF complex, a multiprotein complex involved in transcriptional activation and repression of select genes by chromatin remodeling (alteration of DNA-nucleosome topology). Specifically binds acetylated lysines on histone 3 and 4. In the complex, it acts as a tissue-specific anchor between histone acetylations and methylations and chromatin remodeling. It thereby probably plays an essential role in heart and skeletal muscle development. Belongs to the neuron-specific chromatin remodeling complex (nBAF complex) and plays a role in neural development. The polypeptide is Zinc finger protein DPF3 (DPF3) (Gallus gallus (Chicken)).